The primary structure comprises 414 residues: ORC1-type DNA replication protein 11 (414 aa).

Residues Val60 to Ala64, Tyr207, and Arg219 each bind ATP.

It belongs to the CDC6/cdc18 family.

Functionally, involved in regulation of DNA replication. This Haloarcula marismortui (strain ATCC 43049 / DSM 3752 / JCM 8966 / VKM B-1809) (Halobacterium marismortui) protein is ORC1-type DNA replication protein 11 (cdc6k).